The chain runs to 113 residues: Putative pterin-4-alpha-carbinolamine dehydratase (113 aa).

It belongs to the pterin-4-alpha-carbinolamine dehydratase family.

The catalysed reaction is (4aS,6R)-4a-hydroxy-L-erythro-5,6,7,8-tetrahydrobiopterin = (6R)-L-erythro-6,7-dihydrobiopterin + H2O. The protein is Putative pterin-4-alpha-carbinolamine dehydratase of Saccharophagus degradans (strain 2-40 / ATCC 43961 / DSM 17024).